The sequence spans 225 residues: Uracil-DNA glycosylase (225 aa).

Residue Asp65 is the Proton acceptor of the active site.

It belongs to the uracil-DNA glycosylase (UDG) superfamily. UNG family.

The protein resides in the cytoplasm. It carries out the reaction Hydrolyzes single-stranded DNA or mismatched double-stranded DNA and polynucleotides, releasing free uracil.. In terms of biological role, excises uracil residues from the DNA which can arise as a result of misincorporation of dUMP residues by DNA polymerase or due to deamination of cytosine. The chain is Uracil-DNA glycosylase from Clostridium beijerinckii (strain ATCC 51743 / NCIMB 8052) (Clostridium acetobutylicum).